Consider the following 745-residue polypeptide: Exocyst complex component 3 (745 aa).

Lysine 28 bears the N6-acetyllysine mark.

The protein belongs to the SEC6 family. In terms of assembly, the exocyst complex is composed of EXOC1, EXOC2, EXOC3, EXOC4, EXOC5, EXOC6, EXOC7 and EXOC8. Interacts with EXOC3L1. Interacts with BIRC6/bruce. Interacts with MYRIP. Interacts with SLC6A9.

Its subcellular location is the cytoplasm. The protein resides in the perinuclear region. It localises to the cell projection. The protein localises to the growth cone. It is found in the neuron projection. Its subcellular location is the midbody. The protein resides in the golgi apparatus. In terms of biological role, component of the exocyst complex involved in the docking of exocytic vesicles with fusion sites on the plasma membrane. This chain is Exocyst complex component 3 (EXOC3), found in Bos taurus (Bovine).